The primary structure comprises 494 residues: 1-aminocyclopropane-1-carboxylate synthase 2 (494 aa).

Lys279 is modified (N6-(pyridoxal phosphate)lysine). A disordered region spans residues Asn474–Tyr494. Residues Val475–Pro484 are compositionally biased toward polar residues.

This sequence belongs to the class-I pyridoxal-phosphate-dependent aminotransferase family. Homodimer. The cofactor is pyridoxal 5'-phosphate.

The catalysed reaction is S-adenosyl-L-methionine = 1-aminocyclopropane-1-carboxylate + S-methyl-5'-thioadenosine + H(+). It functions in the pathway alkene biosynthesis; ethylene biosynthesis via S-adenosyl-L-methionine; ethylene from S-adenosyl-L-methionine: step 1/2. Catalyzes the formation of 1-aminocyclopropane-1-carboxylate, a direct precursor of ethylene in higher plants. The chain is 1-aminocyclopropane-1-carboxylate synthase 2 (ACS2) from Cucurbita pepo (Vegetable marrow).